Reading from the N-terminus, the 171-residue chain is Protein-export protein SecB (171 aa).

It belongs to the SecB family. In terms of assembly, homotetramer, a dimer of dimers. One homotetramer interacts with 1 SecA dimer.

It is found in the cytoplasm. In terms of biological role, one of the proteins required for the normal export of preproteins out of the cell cytoplasm. It is a molecular chaperone that binds to a subset of precursor proteins, maintaining them in a translocation-competent state. It also specifically binds to its receptor SecA. The chain is Protein-export protein SecB from Gluconacetobacter diazotrophicus (strain ATCC 49037 / DSM 5601 / CCUG 37298 / CIP 103539 / LMG 7603 / PAl5).